The primary structure comprises 856 residues: Serine/threonine-protein phosphatase 6 regulatory subunit 1 (856 aa).

Positions 10–403 (SSHLDTLLEK…VFNNFLHAQV (394 aa)) are interaction with PPP6C. Phosphoserine is present on Ser232. A Phosphothreonine modification is found at Thr524. Phosphoserine occurs at positions 529, 530, and 531. A compositionally biased stretch (acidic residues) spans 621-630 (DDEEEEEEEG). 2 disordered regions span residues 621 to 770 (DDEE…KVAE) and 792 to 856 (RSAP…SGSQ). 2 positions are modified to phosphoserine: Ser633 and Ser636. The segment covering 644-656 (QGSQPVRASQASQ) has biased composition (polar residues). The segment covering 667–683 (DSEEEDEEEDEEEDEGA) has biased composition (acidic residues). A phosphoserine mark is found at Ser698 and Ser739. Positions 794-809 (APSSLDSATRDPSTSV) are enriched in polar residues. Ser826 bears the Phosphoserine mark. Residues 842–856 (PNGSTPGGPISSGSQ) are compositionally biased toward low complexity.

The protein belongs to the SAPS family. Protein phosphatase 6 (PP6) holoenzyme is proposed to be a heterotrimeric complex formed of the catalytic subunit, a SAPS domain-containing subunit (PP6R) and an ankyrin repeat-domain containing regulatory subunit (ARS). Interacts with PPP6C and NFKBIE. Interacts with ANKRD28, ANKRD44 and ANKRD52. In terms of tissue distribution, ubiquitous with highest expression in lung, spleen and bladder.

The protein resides in the cytoplasm. In terms of biological role, regulatory subunit of protein phosphatase 6 (PP6). May function as a scaffolding PP6 subunit. Involved in the PP6-mediated dephosphorylation of NFKBIE opposing its degradation in response to TNF-alpha. In Mus musculus (Mouse), this protein is Serine/threonine-protein phosphatase 6 regulatory subunit 1 (Ppp6r1).